A 211-amino-acid polypeptide reads, in one-letter code: Heat shock 70 kDa protein 4L (211 aa).

Ser-161 carries the post-translational modification Phosphoserine.

This sequence belongs to the heat shock protein 70 family. Homodimer.

The protein localises to the cytoplasm. It is found in the nucleus. In terms of biological role, possesses chaperone activity in vitro where it inhibits aggregation of citrate synthase. This chain is Heat shock 70 kDa protein 4L, found in Mesocricetus auratus (Golden hamster).